Consider the following 246-residue polypeptide: Probable maleylacetoacetate isomerase 1 (246 aa).

The GST N-terminal domain occupies 32–116 (TKPILYSYWP…YLEETRPQPA (85 aa)). Glutathione contacts are provided by residues 42–47 (SSCSWR), valine 88, 100–101 (DS), glutamine 140, and 144–146 (NVS). A GST C-terminal domain is found at 121-241 (DPVKRAKIRE…HPSTQPDCPP (121 aa)).

This sequence belongs to the GST superfamily. Zeta family. It depends on glutathione as a cofactor.

Its subcellular location is the cytoplasm. It catalyses the reaction 4-maleylacetoacetate = 4-fumarylacetoacetate. The enzyme catalyses RX + glutathione = an S-substituted glutathione + a halide anion + H(+). It functions in the pathway amino-acid degradation; L-phenylalanine degradation; acetoacetate and fumarate from L-phenylalanine: step 5/6. Catalyzes the glutathione dependent oxygenation of dichloroacetic acid to glyoxylic acid in vitro. Possesses low glutathione thioltransferase activity toward 4-hydroxynonenal (4-HNE). Has no glutathione thioltransferase activity with adrenochrome, phenethyl isothiocyanate (PEITC), 5-hydroperoxyeicosatetraenoic acid ((5S)-HpETE), prostaglandin A2 (PGA2) or 2-hydroxyethyldisulfide (HED). This Drosophila melanogaster (Fruit fly) protein is Probable maleylacetoacetate isomerase 1 (GstZ1).